A 281-amino-acid polypeptide reads, in one-letter code: NADH--cytochrome b5 reductase 1 (281 aa).

The helical transmembrane segment at 13-33 (ILLGVFVAFVAVGAGAAYFLT) threads the bilayer. The AKR2A-binding sequence (ABS) required for mitochondrion outer membrane targeting motif lies at 34 to 40 (SSKKRRV). The 105-residue stretch at 45–149 (ENFKEFKLVK…KGPKGRFKYQ (105 aa)) folds into the FAD-binding FR-type domain. FAD contacts are provided by residues 129 to 144 (REMR…GPKG) and 155 to 187 (AFGM…KVHL). Thr166 carries the post-translational modification Phosphothreonine.

The protein belongs to the flavoprotein pyridine nucleotide cytochrome reductase family. As to quaternary structure, monomer. Interacts with AKR2A. FAD is required as a cofactor. In terms of tissue distribution, expressed in roots, stems, flowers and siliques. Detected in leaves.

Its subcellular location is the mitochondrion outer membrane. The catalysed reaction is 2 Fe(III)-[cytochrome b5] + NADH = 2 Fe(II)-[cytochrome b5] + NAD(+) + H(+). Reductase transferring electrons from NADH to cytochrome b5. Required for the NADH-dependent electron transfer involved in the desaturation and hydroxylation of fatty acids and in the desaturation of sterol precursors. No activity with NADPH as electron donor. The protein is NADH--cytochrome b5 reductase 1 of Arabidopsis thaliana (Mouse-ear cress).